A 487-amino-acid polypeptide reads, in one-letter code: UDP-glycosyltransferase 72E1 (487 aa).

The active-site Proton acceptor is the His-18. His-18 provides a ligand contact to an anthocyanidin. Asp-116 acts as the Charge relay in catalysis. UDP-alpha-D-glucose-binding residues include Ala-351, Gln-353, His-368, Trp-371, Asn-372, Ser-373, and Glu-376. Position 391 (Ala-391) interacts with an anthocyanidin. The UDP-alpha-D-glucose site is built by Glu-392 and Gln-393.

It belongs to the UDP-glycosyltransferase family. In terms of assembly, interacts with SIS8. In terms of tissue distribution, expressed in seedlings, roots and leaves.

Its subcellular location is the nucleus. The catalysed reaction is (E)-coniferaldehyde + UDP-alpha-D-glucose = 4-O-(beta-D-glucosyl)-4-(E)-coniferyl aldehyde + UDP + H(+). The enzyme catalyses (E)-sinapaldehyde + UDP-alpha-D-glucose = 4-O-(beta-D-glucosyl)-4-trans-sinapoyl aldehyde + UDP + H(+). UDP-glycosyltransferase that glucosylates coniferyl aldehyde to form coniferyl aldehyde 4-O-glucoside. Glucosylates sinapyl aldehyde to form sinapyl aldehyde 4-O-glucoside. Is not active in presence of coniferyl alcohol or sinapyl alcohol. Can glucosylate the phytotoxic xenobiotic compound 2,4,5-trichlorophenol (TCP). The polypeptide is UDP-glycosyltransferase 72E1 (Arabidopsis thaliana (Mouse-ear cress)).